Consider the following 56-residue polypeptide: uncharacterized protein (56 aa).

Residues histidine 21–proline 38 are compositionally biased toward basic residues. The disordered stretch occupies residues histidine 21–histidine 40.

This is an uncharacterized protein from Saccharomyces cerevisiae (strain ATCC 204508 / S288c) (Baker's yeast).